We begin with the raw amino-acid sequence, 341 residues long: Phosphate acyltransferase (341 aa).

It belongs to the PlsX family. In terms of assembly, homodimer. Probably interacts with PlsY.

It localises to the cytoplasm. The catalysed reaction is a fatty acyl-[ACP] + phosphate = an acyl phosphate + holo-[ACP]. The protein operates within lipid metabolism; phospholipid metabolism. Its function is as follows. Catalyzes the reversible formation of acyl-phosphate (acyl-PO(4)) from acyl-[acyl-carrier-protein] (acyl-ACP). This enzyme utilizes acyl-ACP as fatty acyl donor, but not acyl-CoA. The chain is Phosphate acyltransferase from Saccharophagus degradans (strain 2-40 / ATCC 43961 / DSM 17024).